The chain runs to 466 residues: Benzoate transport protein (466 aa).

The Cytoplasmic portion of the chain corresponds to 1–22 (MSREINVNQMIDDSKLTPFHWR). Residues 23–43 (VIILSTLIIIFDGYDLVIYGV) form a helical membrane-spanning segment. Residues 44 to 60 (ALPLLMKEWAIDPVTAG) are Periplasmic-facing. Residues 61 to 81 (FIGSIALFGMMFGALIFGTIA) traverse the membrane as a helical segment. Over 82–93 (DKLEHLGVSRKK) the chain is Cytoplasmic. Residues 94–114 (VIAVCIILFSLCTVLCGFSET) form a helical membrane-spanning segment. The Periplasmic segment spans residues 115-119 (TTQFS). Residues 120 to 140 (IFRFLAGVGIGGVMPNVIALV) traverse the membrane as a helical segment. Topologically, residues 141 to 150 (SEYAPKKFKS) are cytoplasmic. The chain crosses the membrane as a helical span at residues 151–171 (FFVTLMFSGYAIGGMTAAFLG). Residues 172 to 181 (SILVPLYGWK) are Periplasmic-facing. Residues 182–202 (IMFMIAGIPLVLLLPLMKVLP) form a helical membrane-spanning segment. Topologically, residues 203 to 258 (ESIDYLVRKKKDETVRFIMTKMVPSYQYQPDHVFVLNSSNQNQAQAPVKMIFQEQR) are cytoplasmic. A helical transmembrane segment spans residues 259–279 (AFSTMMFWCSIFMTLIMVYAL). Topologically, residues 280-297 (GNWLPKLMIEAGYNLSKS) are periplasmic. Residues 298–318 (LIFLFSLNVGGMIGSILGGYL) traverse the membrane as a helical segment. Residues 319 to 325 (ADRYNVK) are Cytoplasmic-facing. The helical transmembrane segment at 326–346 (FVTMGLLLLGAISLSLLSFQF) threads the bilayer. At 347 to 348 (SS) the chain is on the periplasmic side. A helical membrane pass occupies residues 349 to 369 (VILYILIACAGAASIGAQIML). Over 370-387 (LAYMAKFYAPNVRSTGIG) the chain is Cytoplasmic. A helical transmembrane segment spans residues 388–408 (WGLGMGRVGAILGPILTGWLL). Over 409-414 (SLQLPH) the chain is Periplasmic. Residues 415–435 (FYNFLALSIPAVLGIVTVFLI) form a helical membrane-spanning segment. Residues 436–466 (NDRRMYQPEPISPIANQNDTTTVKVNEAVSH) lie on the Cytoplasmic side of the membrane.

Belongs to the major facilitator superfamily. Aromatic acid:H(+) symporter (AAHS) (TC 2.A.1.15) family.

It is found in the cell inner membrane. Functionally, probable uptake of benzoate. This is Benzoate transport protein (benK) from Acinetobacter baylyi (strain ATCC 33305 / BD413 / ADP1).